The sequence spans 115 residues: NAD(P)H-quinone oxidoreductase subunit M (115 aa).

This sequence belongs to the complex I NdhM subunit family. NDH-1 can be composed of about 15 different subunits; different subcomplexes with different compositions have been identified which probably have different functions.

The protein resides in the cellular thylakoid membrane. It catalyses the reaction a plastoquinone + NADH + (n+1) H(+)(in) = a plastoquinol + NAD(+) + n H(+)(out). The enzyme catalyses a plastoquinone + NADPH + (n+1) H(+)(in) = a plastoquinol + NADP(+) + n H(+)(out). In terms of biological role, NDH-1 shuttles electrons from an unknown electron donor, via FMN and iron-sulfur (Fe-S) centers, to quinones in the respiratory and/or the photosynthetic chain. The immediate electron acceptor for the enzyme in this species is believed to be plastoquinone. Couples the redox reaction to proton translocation, and thus conserves the redox energy in a proton gradient. Cyanobacterial NDH-1 also plays a role in inorganic carbon-concentration. The sequence is that of NAD(P)H-quinone oxidoreductase subunit M from Parasynechococcus marenigrum (strain WH8102).